The chain runs to 100 residues: uncharacterized protein (100 aa).

This is an uncharacterized protein from Escherichia phage P2 (Bacteriophage P2).